The primary structure comprises 284 residues: Averufin oxidase A (284 aa).

Positions 1 to 23 (MPTYALLGATGATGSAILRCLLA) are cleaved as a signal peptide. N-linked (GlcNAc...) asparagine glycosylation is found at asparagine 62, asparagine 86, and asparagine 190.

It belongs to the avfA family.

Its pathway is mycotoxin biosynthesis. In terms of biological role, averufin oxidase A; part of the fragmented gene cluster that mediates the biosynthesis of dothistromin (DOTH), a polyketide toxin very similar in structure to the aflatoxin precursor, versicolorin B. The first step of the pathway is the conversion of acetate to norsolorinic acid (NOR) and requires the fatty acid synthase subunits hexA and hexB, as well as the polyketide synthase pksA. PksA combines a hexanoyl starter unit and 7 malonyl-CoA extender units to synthesize the precursor NOR. The hexanoyl starter unit is provided to the acyl-carrier protein (ACP) domain by the fungal fatty acid synthase hexA/hexB. The second step is the conversion of NOR to averantin (AVN) and requires the norsolorinic acid ketoreductase nor1, which catalyzes the dehydration of norsolorinic acid to form (1'S)-averantin. The cytochrome P450 monooxygenase avnA then catalyzes the hydroxylation of AVN to 5'hydroxyaverantin (HAVN). The next step is performed by adhA that transforms HAVN to averufin (AVF). Averufin might then be converted to hydroxyversicolorone by cypX and avfA. Hydroxyversicolorone is further converted versiconal hemiacetal acetate (VHA) by moxY. VHA is then the substrate for the versiconal hemiacetal acetate esterase est1 to yield versiconal (VAL). Versicolorin B synthase vbsA then converts VAL to versicolorin B (VERB) by closing the bisfuran ring. Then, the activity of the versicolorin B desaturase verB leads to versicolorin A (VERA). DotB, a predicted chloroperoxidase, may perform epoxidation of the A-ring of VERA. Alternatively, a cytochrome P450, such as cypX or avnA could catalyze this step. It is also possible that another, uncharacterized, cytochrome P450 enzyme is responsible for this step. Opening of the epoxide could potentially be achieved by the epoxide hydrolase epoA. However, epoA seems not to be required for DOTH biosynthesis, but other epoxide hydrolases may have the ability to complement this hydrolysis. Alternatively, opening of the epoxide ring could be achieved non-enzymatically. The next step is the deoxygenation of ring A to yield the 5,8-dihydroxyanthraquinone which is most likely catalyzed by the NADPH dehydrogenase encoded by ver1. The last stages of DOTH biosynthesis are proposed to involve hydroxylation of the bisfuran. OrdB and norB might have oxidative roles here. An alternative possibility is that cytochrome P450 monoogenases such as avnA and cypX might perform these steps in addition to previously proposed steps. This Dothistroma septosporum (strain NZE10 / CBS 128990) (Red band needle blight fungus) protein is Averufin oxidase A.